Consider the following 894-residue polypeptide: Translation initiation factor IF-2 (894 aa).

Residues 47–305 (AHLNRENGSG…GSALQQSFQK (259 aa)) form a disordered region. The span at 68–82 (STLNIPGTGGKSKSV) shows a compositional bias: polar residues. Basic and acidic residues-rich tracts occupy residues 93–159 (VKRD…KDKV) and 166–219 (DMTK…KWTD). Positions 254 to 269 (GRSRNAKAARPAKKGN) are enriched in basic residues. Residues 270 to 283 (KHSESKADREEARA) are compositionally biased toward basic and acidic residues. The region spanning 393–562 (PRAPVVTIMG…LLQAEVLELK (170 aa)) is the tr-type G domain. The segment at 402 to 409 (GHVDHGKT) is G1. 402–409 (GHVDHGKT) contacts GTP. The interval 427-431 (GITQH) is G2. Residues 448 to 451 (DTPG) form a G3 region. GTP contacts are provided by residues 448–452 (DTPGH) and 502–505 (NKID). Residues 502-505 (NKID) form a G4 region. The G5 stretch occupies residues 538–540 (SAK).

This sequence belongs to the TRAFAC class translation factor GTPase superfamily. Classic translation factor GTPase family. IF-2 subfamily.

It localises to the cytoplasm. One of the essential components for the initiation of protein synthesis. Protects formylmethionyl-tRNA from spontaneous hydrolysis and promotes its binding to the 30S ribosomal subunits. Also involved in the hydrolysis of GTP during the formation of the 70S ribosomal complex. The chain is Translation initiation factor IF-2 from Citrobacter koseri (strain ATCC BAA-895 / CDC 4225-83 / SGSC4696).